Consider the following 262-residue polypeptide: Thrombin-like enzyme gyroxin B1.4 (262 aa).

An N-terminal signal peptide occupies residues methionine 1 to alanine 18. A propeptide spanning residues glutamine 19–proline 262 is cleaved from the precursor. One can recognise a Peptidase S1 domain in the interval valine 25–alanine 253. Intrachain disulfides connect cysteine 31–cysteine 165, cysteine 52–cysteine 68, cysteine 102–cysteine 260, cysteine 144–cysteine 214, cysteine 176–cysteine 193, and cysteine 204–cysteine 229. Histidine 67 (charge relay system) is an active-site residue. Residue asparagine 105 is glycosylated (N-linked (GlcNAc...) asparagine). The active-site Charge relay system is the aspartate 112. Serine 208 acts as the Charge relay system in catalysis.

It belongs to the peptidase S1 family. Snake venom subfamily. In terms of assembly, monomer. Expressed by the venom gland.

The protein localises to the secreted. In terms of biological role, thrombin-like snake venom serine protease. Displays a specificity similar to trypsin. Releases only fibrinopeptide A in the conversion of fibrinogen to fibrin. Shows coagulant, esterase and amidase activities. Reversibly increases the permeability of the blood brain barrier (BBB) in mice. Induces the barrel rotation syndrome in mice, which is manifested by gyroxin-like, rapid rolling motions. This syndrome may be due to its effect on BBB permeability, and certainly also to other actions affecting endogenous substrates present in the endothelium, nervous tissues or blood. The chain is Thrombin-like enzyme gyroxin B1.4 from Crotalus durissus terrificus (South American rattlesnake).